The following is a 228-amino-acid chain: Protein N-lysine methyltransferase METTL21D (228 aa).

N-acetylalanine is present on A2. S-adenosyl-L-methionine contacts are provided by residues W43, G75 to G77, D96, W126, A142, and Y147.

The protein belongs to the methyltransferase superfamily. METTL21 family. In terms of assembly, interacts with ALKBH6. Interacts with ASPSCR1 and UBXN6; interaction with ASPSCR1, but not with UBXN6, enhances VCP methylation. Widely expressed.

It localises to the cytoplasm. The enzyme catalyses L-lysyl-[protein] + 3 S-adenosyl-L-methionine = N(6),N(6),N(6)-trimethyl-L-lysyl-[protein] + 3 S-adenosyl-L-homocysteine + 3 H(+). Protein N-lysine methyltransferase that specifically trimethylates 'Lys-315' of VCP/p97; this modification may decrease VCP ATPase activity. The protein is Protein N-lysine methyltransferase METTL21D (Vcpkmt) of Mus musculus (Mouse).